The sequence spans 547 residues: Chaperonin GroEL (547 aa).

ATP is bound by residues threonine 30–proline 33, lysine 51, aspartate 87–threonine 91, glycine 415, and aspartate 495.

This sequence belongs to the chaperonin (HSP60) family. As to quaternary structure, forms a cylinder of 14 subunits composed of two heptameric rings stacked back-to-back. Interacts with the co-chaperonin GroES.

The protein resides in the cytoplasm. It catalyses the reaction ATP + H2O + a folded polypeptide = ADP + phosphate + an unfolded polypeptide.. Together with its co-chaperonin GroES, plays an essential role in assisting protein folding. The GroEL-GroES system forms a nano-cage that allows encapsulation of the non-native substrate proteins and provides a physical environment optimized to promote and accelerate protein folding. The sequence is that of Chaperonin GroEL from Aggregatibacter actinomycetemcomitans (Actinobacillus actinomycetemcomitans).